A 770-amino-acid chain; its full sequence is Shutoff protein (770 aa).

Disordered stretches follow at residues 1 to 20 and 30 to 49; these read MEED…PNSE and EEEN…PEDG. Residues 10 to 19 show a composition bias toward polar residues; that stretch reads DSETLTTPNS. Residues 248–312 form a binding to host EIF4G region; it reads VMDQVLIKRA…AVLVTVELEC (65 aa). The 119-residue stretch at 315–433 folds into the RRM domain; it reads RFFANPQTLR…ELWTSFDERT (119 aa). 2 positions are modified to phosphotyrosine; by host: Tyr-332 and Tyr-647. The segment at 661–770 is disordered; that stretch reads LSAAASCRSQ…TATMFTESQP (110 aa). Positions 726–739 are enriched in basic residues; that stretch reads GGPRGRGGRNHRQR. Polar residues predominate over residues 742–755; that stretch reads TIFQKTRSEPTSEN.

It belongs to the adenoviridae shutoff protein family. In terms of assembly, monomer. Interacts with hexon protein; this interaction allows chaperoning and trimerization of hexon proteins. Interacts (via N-terminus) with host initiation factor EIF4G (via C-terminus). Interacts (via RRM domain) with viral mRNAs that contain the tripartite leader; this interaction allows ribosome shunting and expression of viral late mRNAs. Post-translationally, might be cleaved by the viral protease. In terms of processing, phosphorylated. Tyrosine phosphorylation enhances preferential binding to tripartite leader mRNAs and allows ribosome shunting. Methylated. Asymmetric dimethylation by host PRMT1 of the Arg/Gly-rich region may regulate shutoff protein binding to hexon and promote the capsid assembly in the nucleus.

The protein resides in the host cytoplasm. Functionally, protein that inhibits host translation while promoting late viral translation by ribosome shunting. Blocks host cap-dependent translation by binding to eIF4G, displacing MKNK1 from cap initiation complexes and preventing EIF4E phosphorylation. Binds to the tripartite leader sequence of viral late mRNAs and recruits host eIF4G, PABPC1/poly-A binding protein and 40S ribosomes subunits on viral mRNAs, allowing ribosome shunting and efficient translation of late viral mRNAs even though conventional translation via ribosome scanning from the cap has been shut off in the host cell. During assembly, acts as a chaperone protein that helps hexon proteins assembly into trimers. This is Shutoff protein from Human adenovirus F serotype 40 (HAdV-40).